We begin with the raw amino-acid sequence, 453 residues long: Serine incorporator 1 (453 aa).

Residue glycine 2 is the site of N-myristoyl glycine attachment. At 2-39 the chain is on the cytoplasmic side; that stretch reads GSVLGLCSMASWIPCLCGSAPCLLCRCCPSGNNSTVTR. A helical membrane pass occupies residues 40 to 60; sequence LIYALFLLVGVCVACVMLIPG. The Lumenal portion of the chain corresponds to 61–88; the sequence is MEEQLNKIPGFCENEKGVVPCNILVGYK. The chain crosses the membrane as a helical span at residues 89–109; that stretch reads AVYRLCFGLAMFYLLLSLLMI. The Cytoplasmic portion of the chain corresponds to 110-123; that stretch reads KVKSSSDPRAAVHN. The chain crosses the membrane as a helical span at residues 124–144; that stretch reads GFWFFKFAAAIAIIIGAFFIP. Residues 145–151 are Lumenal-facing; the sequence is EGTFTTV. The helical transmembrane segment at 152 to 172 threads the bilayer; it reads WFYVGMAGAFCFILIQLVLLI. Residues 173-197 are Cytoplasmic-facing; the sequence is DFAHSWNESWVEKMEEGNSRCWYAA. A helical membrane pass occupies residues 198–218; it reads LLSATALNYLLSLVAIVLFFV. The Lumenal portion of the chain corresponds to 219 to 231; sequence YYTHPASCSENKA. The chain crosses the membrane as a helical span at residues 232 to 252; sequence FISVNMLLCIGASVMSILPKI. Topologically, residues 253-259 are cytoplasmic; the sequence is QESQPRS. The chain crosses the membrane as a helical span at residues 260–280; it reads GLLQSSVITVYTMYLTWSAMT. Residues 281-309 lie on the Lumenal side of the membrane; sequence NEPETNCNPSLLSIIGYNTTSTVPKEGQS. The helical transmembrane segment at 310–330 threads the bilayer; the sequence is VQWWHAQGIIGLILFLLCVFY. Residues 331-387 are Cytoplasmic-facing; sequence SSIRTSNNSQVNKLTLTSDESTLIEDGGARSDGSLEDGDDVHRAVDNERDGVTYSYS. The residue at position 351 (serine 351) is a Phosphoserine. Threonine 352 is modified (phosphothreonine). A phosphoserine mark is found at serine 361 and serine 364. The chain crosses the membrane as a helical span at residues 388 to 408; it reads FFHFMLFLASLYIMMTLTNWY. Residues 409-426 lie on the Lumenal side of the membrane; that stretch reads RYEPSREMKSQWTAVWVK. Residues 427-447 traverse the membrane as a helical segment; that stretch reads ISSSWIGIVLYVWTLVAPLVL. The Cytoplasmic segment spans residues 448 to 453; the sequence is TNRDFD.

It belongs to the TDE1 family. Interacts with SPTLC1.

The protein localises to the endoplasmic reticulum membrane. Enhances the incorporation of serine into phosphatidylserine and sphingolipids. This chain is Serine incorporator 1 (SERINC1), found in Pongo abelii (Sumatran orangutan).